Consider the following 78-residue polypeptide: Beta-defensin 105A (78 aa).

Positions Met1 to Ala27 are cleaved as a signal peptide. Disulfide bonds link Cys46-Cys74, Cys53-Cys67, and Cys57-Cys73.

This sequence belongs to the beta-defensin family.

It localises to the secreted. Functionally, has antimicrobial activity. This Hylobates lar (Lar gibbon) protein is Beta-defensin 105A (DEFB105A).